The following is a 396-amino-acid chain: 1-deoxy-D-xylulose 5-phosphate reductoisomerase (396 aa).

NADPH is bound by residues Thr10, Gly11, Ser12, Ile13, and Asn123. 1-deoxy-D-xylulose 5-phosphate is bound at residue Lys124. Glu125 serves as a coordination point for NADPH. Asp149 is a Mn(2+) binding site. Residues Ser150, Glu151, Ser185, and His208 each coordinate 1-deoxy-D-xylulose 5-phosphate. Position 151 (Glu151) interacts with Mn(2+). Gly214 is an NADPH binding site. 1-deoxy-D-xylulose 5-phosphate is bound by residues Ser221, Asn226, Lys227, and Glu230. Glu230 is a binding site for Mn(2+).

This sequence belongs to the DXR family. The cofactor is Mg(2+). Requires Mn(2+) as cofactor.

It carries out the reaction 2-C-methyl-D-erythritol 4-phosphate + NADP(+) = 1-deoxy-D-xylulose 5-phosphate + NADPH + H(+). It functions in the pathway isoprenoid biosynthesis; isopentenyl diphosphate biosynthesis via DXP pathway; isopentenyl diphosphate from 1-deoxy-D-xylulose 5-phosphate: step 1/6. In terms of biological role, catalyzes the NADPH-dependent rearrangement and reduction of 1-deoxy-D-xylulose-5-phosphate (DXP) to 2-C-methyl-D-erythritol 4-phosphate (MEP). The sequence is that of 1-deoxy-D-xylulose 5-phosphate reductoisomerase from Shewanella frigidimarina (strain NCIMB 400).